A 165-amino-acid polypeptide reads, in one-letter code: Putative pre-16S rRNA nuclease (165 aa).

Belongs to the YqgF nuclease family.

Its subcellular location is the cytoplasm. In terms of biological role, could be a nuclease involved in processing of the 5'-end of pre-16S rRNA. The polypeptide is Putative pre-16S rRNA nuclease (Brucella anthropi (strain ATCC 49188 / DSM 6882 / CCUG 24695 / JCM 21032 / LMG 3331 / NBRC 15819 / NCTC 12168 / Alc 37) (Ochrobactrum anthropi)).